The primary structure comprises 308 residues: FGSLLGICLLTQIITGLLLATHYTADTSLAFSSVAHMCRDVQFGWLIRNLHANGASFFFICIYIHIGRGLYYGSYLNKETWNVGVILLLTLMATAFVGYVLPWGQMSFWGATVITNLFSAIPYIGQTLVEWAWGGFSVDNPTLTRFFALHFLLPFAITGLTLVHLTFLHETGSNNPLGIPSDCDKIPFHPYYSMKDILGFALMIIPLAALALFSPNLLGDPENFTPANPLATPPHIKPEWYFLFAYAILRSIPNKLGGVLALAASILVLFLIPLLHKSKQRSMTFRPLSQILFWTLVANLLILTWVGS.

Transmembrane regions (helical) follow at residues 1–21, 45–66, 81–101, and 146–166; these read FGSL…LLAT, WLIR…YIHI, WNVG…GYVL, and FFAL…VHLT. Residues H51 and H65 each contribute to the heme b site. 2 residues coordinate heme b: H150 and H164. H169 is an a ubiquinone binding site. A run of 3 helical transmembrane segments spans residues 194–214, 256–276, and 288–308; these read MKDI…ALFS, LGGV…PLLH, and LSQI…WVGS.

It belongs to the cytochrome b family. As to quaternary structure, the cytochrome bc1 complex contains 11 subunits: 3 respiratory subunits (MT-CYB, CYC1 and UQCRFS1), 2 core proteins (UQCRC1 and UQCRC2) and 6 low-molecular weight proteins (UQCRH/QCR6, UQCRB/QCR7, UQCRQ/QCR8, UQCR10/QCR9, UQCR11/QCR10 and a cleavage product of UQCRFS1). This cytochrome bc1 complex then forms a dimer. Requires heme b as cofactor.

Its subcellular location is the mitochondrion inner membrane. Component of the ubiquinol-cytochrome c reductase complex (complex III or cytochrome b-c1 complex) that is part of the mitochondrial respiratory chain. The b-c1 complex mediates electron transfer from ubiquinol to cytochrome c. Contributes to the generation of a proton gradient across the mitochondrial membrane that is then used for ATP synthesis. The polypeptide is Cytochrome b (MT-CYB) (Ptiloprora plumbea (Leaden honeyeater)).